Here is a 425-residue protein sequence, read N- to C-terminus: Serine--tRNA ligase (425 aa).

232–234 (TSE) is an L-serine binding site. ATP contacts are provided by residues 263 to 265 (RRE) and Val-279. Residue Glu-286 participates in L-serine binding. 350–353 (EVVS) serves as a coordination point for ATP. Thr-387 lines the L-serine pocket.

This sequence belongs to the class-II aminoacyl-tRNA synthetase family. Type-1 seryl-tRNA synthetase subfamily. In terms of assembly, homodimer. The tRNA molecule binds across the dimer.

The protein localises to the cytoplasm. The catalysed reaction is tRNA(Ser) + L-serine + ATP = L-seryl-tRNA(Ser) + AMP + diphosphate + H(+). It carries out the reaction tRNA(Sec) + L-serine + ATP = L-seryl-tRNA(Sec) + AMP + diphosphate + H(+). Its pathway is aminoacyl-tRNA biosynthesis; selenocysteinyl-tRNA(Sec) biosynthesis; L-seryl-tRNA(Sec) from L-serine and tRNA(Sec): step 1/1. Catalyzes the attachment of serine to tRNA(Ser). Is also able to aminoacylate tRNA(Sec) with serine, to form the misacylated tRNA L-seryl-tRNA(Sec), which will be further converted into selenocysteinyl-tRNA(Sec). The polypeptide is Serine--tRNA ligase (Methanospirillum hungatei JF-1 (strain ATCC 27890 / DSM 864 / NBRC 100397 / JF-1)).